A 634-amino-acid polypeptide reads, in one-letter code: DNA-directed RNA polymerase subunit gamma (634 aa).

Positions 74, 76, 89, and 92 each coordinate Zn(2+). Positions 471, 473, and 475 each coordinate Mg(2+).

Belongs to the RNA polymerase beta' chain family. RpoC1 subfamily. As to quaternary structure, in cyanobacteria the RNAP catalytic core is composed of 2 alpha, 1 beta, 1 beta', 1 gamma and 1 omega subunit. When a sigma factor is associated with the core the holoenzyme is formed, which can initiate transcription. Mg(2+) serves as cofactor. Requires Zn(2+) as cofactor.

The enzyme catalyses RNA(n) + a ribonucleoside 5'-triphosphate = RNA(n+1) + diphosphate. In terms of biological role, DNA-dependent RNA polymerase catalyzes the transcription of DNA into RNA using the four ribonucleoside triphosphates as substrates. The sequence is that of DNA-directed RNA polymerase subunit gamma from Parasynechococcus marenigrum (strain WH8102).